A 360-amino-acid polypeptide reads, in one-letter code: MLVYLAEYLTQFHTGFHVFSYVTFRAILGLLTALVFSLWCGPKLIRRLQLLQIGQVVRNDGPESHFSKRGTPTMGGLLILAGIFVSVLLWGDLESRYVLVMLFVLGSFGTIGFIDDYRKVVRKDTKGLIARWKYILQSLAALVVAVFLYSSSTLPGETQLVVPFFKDVMPQLGLVFIVLAYFTIVGASNAVNLTDGLDGLAIMPTVMVAGAFALIAYLSGHVQFANYLHIPHLPEAGELVIVCTAIVGAGLGFLWFNTYPAQVFMGDVGSLALGAALGAIAVLVRQEILLVIMGGVFVMETVSVILQVGSYKLRGQRIFRMAPIHHHYELKGWPEPRVIVRFWIISLFLVLLGLATLKLR.

A run of 10 helical transmembrane segments spans residues 18–38 (VFSYVTFRAILGLLTALVFSL), 73–93 (TMGGLLILAGIFVSVLLWGDL), 97–117 (YVLVMLFVLGSFGTIGFIDDY), 134–154 (YILQSLAALVVAVFLYSSSTL), 168–188 (VMPQLGLVFIVLAYFTIVGAS), 199–219 (GLAIMPTVMVAGAFALIAYLS), 236–256 (AGELVIVCTAIVGAGLGFLWF), 263–283 (VFMGDVGSLALGAALGAIAVL), 288–308 (ILLVIMGGVFVMETVSVILQV), and 338–358 (VIVRFWIISLFLVLLGLATLK).

This sequence belongs to the glycosyltransferase 4 family. MraY subfamily. The cofactor is Mg(2+).

It localises to the cell inner membrane. It catalyses the reaction UDP-N-acetyl-alpha-D-muramoyl-L-alanyl-gamma-D-glutamyl-meso-2,6-diaminopimeloyl-D-alanyl-D-alanine + di-trans,octa-cis-undecaprenyl phosphate = di-trans,octa-cis-undecaprenyl diphospho-N-acetyl-alpha-D-muramoyl-L-alanyl-D-glutamyl-meso-2,6-diaminopimeloyl-D-alanyl-D-alanine + UMP. It participates in cell wall biogenesis; peptidoglycan biosynthesis. Functionally, catalyzes the initial step of the lipid cycle reactions in the biosynthesis of the cell wall peptidoglycan: transfers peptidoglycan precursor phospho-MurNAc-pentapeptide from UDP-MurNAc-pentapeptide onto the lipid carrier undecaprenyl phosphate, yielding undecaprenyl-pyrophosphoryl-MurNAc-pentapeptide, known as lipid I. This Shewanella denitrificans (strain OS217 / ATCC BAA-1090 / DSM 15013) protein is Phospho-N-acetylmuramoyl-pentapeptide-transferase.